Here is a 68-residue protein sequence, read N- to C-terminus: Putative alpha-conotoxin Qc alphaL-1 (68 aa).

The N-terminal stretch at 1–21 (MGMRMMFTMFLLVVLATTVVS) is a signal peptide. The propeptide occupies 22 to 49 (INLDHAFDGRNAAANNKATDLMARTVRR). Residues C51 and C64 are joined by a disulfide bond.

It belongs to the conotoxin A superfamily. As to expression, expressed by the venom duct.

The protein localises to the secreted. In terms of biological role, alpha-conotoxins act on postsynaptic membranes, they bind to the nicotinic acetylcholine receptors (nAChR) and thus inhibit them. The protein is Putative alpha-conotoxin Qc alphaL-1 of Conus quercinus (Oak cone).